Reading from the N-terminus, the 379-residue chain is 3-dehydroquinate synthase (379 aa).

NAD(+)-binding positions include 67–72, 101–105, 125–126, Lys138, and Lys147; these read PGEKNK, GIILD, and TT. Positions 180, 242, and 258 each coordinate Zn(2+).

Belongs to the sugar phosphate cyclases superfamily. Dehydroquinate synthase family. Requires NAD(+) as cofactor. The cofactor is Co(2+). Zn(2+) is required as a cofactor.

It localises to the cytoplasm. The catalysed reaction is 7-phospho-2-dehydro-3-deoxy-D-arabino-heptonate = 3-dehydroquinate + phosphate. Its pathway is metabolic intermediate biosynthesis; chorismate biosynthesis; chorismate from D-erythrose 4-phosphate and phosphoenolpyruvate: step 2/7. Functionally, catalyzes the conversion of 3-deoxy-D-arabino-heptulosonate 7-phosphate (DAHP) to dehydroquinate (DHQ). The polypeptide is 3-dehydroquinate synthase (Chlamydia caviae (strain ATCC VR-813 / DSM 19441 / 03DC25 / GPIC) (Chlamydophila caviae)).